Reading from the N-terminus, the 325-residue chain is 4-hydroxy-3-methylbut-2-enyl diphosphate reductase (325 aa).

C21 contributes to the [4Fe-4S] cluster binding site. (2E)-4-hydroxy-3-methylbut-2-enyl diphosphate-binding residues include H50 and H83. 2 residues coordinate dimethylallyl diphosphate: H50 and H83. The isopentenyl diphosphate site is built by H50 and H83. Residue C105 participates in [4Fe-4S] cluster binding. Position 133 (H133) interacts with (2E)-4-hydroxy-3-methylbut-2-enyl diphosphate. A dimethylallyl diphosphate-binding site is contributed by H133. H133 contributes to the isopentenyl diphosphate binding site. The active-site Proton donor is the E135. T173 lines the (2E)-4-hydroxy-3-methylbut-2-enyl diphosphate pocket. C203 contributes to the [4Fe-4S] cluster binding site. The (2E)-4-hydroxy-3-methylbut-2-enyl diphosphate site is built by S231, S232, N233, and S275. S231, S232, N233, and S275 together coordinate dimethylallyl diphosphate. Residues S231, S232, N233, and S275 each coordinate isopentenyl diphosphate.

Belongs to the IspH family. It depends on [4Fe-4S] cluster as a cofactor.

It carries out the reaction isopentenyl diphosphate + 2 oxidized [2Fe-2S]-[ferredoxin] + H2O = (2E)-4-hydroxy-3-methylbut-2-enyl diphosphate + 2 reduced [2Fe-2S]-[ferredoxin] + 2 H(+). The enzyme catalyses dimethylallyl diphosphate + 2 oxidized [2Fe-2S]-[ferredoxin] + H2O = (2E)-4-hydroxy-3-methylbut-2-enyl diphosphate + 2 reduced [2Fe-2S]-[ferredoxin] + 2 H(+). The protein operates within isoprenoid biosynthesis; dimethylallyl diphosphate biosynthesis; dimethylallyl diphosphate from (2E)-4-hydroxy-3-methylbutenyl diphosphate: step 1/1. It participates in isoprenoid biosynthesis; isopentenyl diphosphate biosynthesis via DXP pathway; isopentenyl diphosphate from 1-deoxy-D-xylulose 5-phosphate: step 6/6. Functionally, catalyzes the conversion of 1-hydroxy-2-methyl-2-(E)-butenyl 4-diphosphate (HMBPP) into a mixture of isopentenyl diphosphate (IPP) and dimethylallyl diphosphate (DMAPP). Acts in the terminal step of the DOXP/MEP pathway for isoprenoid precursor biosynthesis. The chain is 4-hydroxy-3-methylbut-2-enyl diphosphate reductase from Bordetella pertussis (strain Tohama I / ATCC BAA-589 / NCTC 13251).